A 146-amino-acid polypeptide reads, in one-letter code: uncharacterized protein (146 aa).

Helical transmembrane passes span 89-111 (AIEMVGKVLILVPLLASLVLLLY) and 121-143 (IGCGFCLGTVILAGIVLVGYSVV).

Its subcellular location is the cell membrane. This is an uncharacterized protein from Archaeoglobus fulgidus (strain ATCC 49558 / DSM 4304 / JCM 9628 / NBRC 100126 / VC-16).